The following is a 207-amino-acid chain: Small ribosomal subunit protein uS4 (207 aa).

The tract at residues Asp-30–Gly-53 is disordered. Residues Gly-42–Phe-52 show a composition bias toward polar residues. One can recognise an S4 RNA-binding domain in the interval Ser-97 to Val-157.

It belongs to the universal ribosomal protein uS4 family. As to quaternary structure, part of the 30S ribosomal subunit. Contacts protein S5. The interaction surface between S4 and S5 is involved in control of translational fidelity.

Its function is as follows. One of the primary rRNA binding proteins, it binds directly to 16S rRNA where it nucleates assembly of the body of the 30S subunit. With S5 and S12 plays an important role in translational accuracy. The protein is Small ribosomal subunit protein uS4 of Delftia acidovorans (strain DSM 14801 / SPH-1).